The following is a 306-amino-acid chain: Methionyl-tRNA formyltransferase (306 aa).

108–111 (SLLP) provides a ligand contact to (6S)-5,6,7,8-tetrahydrofolate.

It belongs to the Fmt family.

The catalysed reaction is L-methionyl-tRNA(fMet) + (6R)-10-formyltetrahydrofolate = N-formyl-L-methionyl-tRNA(fMet) + (6S)-5,6,7,8-tetrahydrofolate + H(+). Attaches a formyl group to the free amino group of methionyl-tRNA(fMet). The formyl group appears to play a dual role in the initiator identity of N-formylmethionyl-tRNA by promoting its recognition by IF2 and preventing the misappropriation of this tRNA by the elongation apparatus. The sequence is that of Methionyl-tRNA formyltransferase from Arthrobacter sp. (strain FB24).